A 406-amino-acid chain; its full sequence is MSETFIHSVSENQIIVNDLENNNDYDNEDNVFIDSSVYNQECFMEILKKLEDGKPIHEVVRFTSHSSYTHTIVKTIQGLFLYVVLKSVNIYGSYYDFQRYIGPSMMIGTYACPLYRVQYRINKNDSTGAIIKYSNNLDECETYFNHLCKVFNVLTKRLSLNSICCGVGLSDSFYLMNTKTIKKSSRTRISFIIGNSKYSQHRKLDGVINDVNSFYCALLGCSFHSDNIVWLIDSDLRTFYDKWYTFLQLVQSFQSYIEVVVYYAGHGRSDNGNLKLIMTDGNPVQLSIIASTLTESIKNSDSLCLFIVDCCRDGENVLPFHYPIESFDDKKNIAVLFACKYGELSYESLELNAGIFTRSFVKTITERKNNNISTICNLTDIAIKRIYKNYSGCSLIGNFDCSLLEF.

The caspase-like stretch occupies residues Ile-193–Thr-374. Active-site residues include His-266 and Cys-311.

This sequence belongs to the peptidase C14B family.

Not required for DIF-induced autophagic cell death and necrotic cell death. In Dictyostelium discoideum (Social amoeba), this protein is Paracaspase (pcp).